Reading from the N-terminus, the 328-residue chain is 4-hydroxythreonine-4-phosphate dehydrogenase (328 aa).

Residues histidine 134 and threonine 135 each coordinate substrate. 3 residues coordinate a divalent metal cation: histidine 164, histidine 209, and histidine 265. Substrate-binding residues include lysine 273, asparagine 282, and arginine 291.

It belongs to the PdxA family. In terms of assembly, homodimer. Zn(2+) is required as a cofactor. Requires Mg(2+) as cofactor. It depends on Co(2+) as a cofactor.

It is found in the cytoplasm. It catalyses the reaction 4-(phosphooxy)-L-threonine + NAD(+) = 3-amino-2-oxopropyl phosphate + CO2 + NADH. The protein operates within cofactor biosynthesis; pyridoxine 5'-phosphate biosynthesis; pyridoxine 5'-phosphate from D-erythrose 4-phosphate: step 4/5. Functionally, catalyzes the NAD(P)-dependent oxidation of 4-(phosphooxy)-L-threonine (HTP) into 2-amino-3-oxo-4-(phosphooxy)butyric acid which spontaneously decarboxylates to form 3-amino-2-oxopropyl phosphate (AHAP). This is 4-hydroxythreonine-4-phosphate dehydrogenase from Vibrio vulnificus (strain YJ016).